A 92-amino-acid polypeptide reads, in one-letter code: Large ribosomal subunit protein bL34m (92 aa).

Residues 1–46 (MAVLAGSLLGPTSRSAALLGGRWLQPRAWLGFPDAWGLPTPQQARG) constitute a mitochondrion transit peptide. Position 71 is a phosphoserine (Ser-71).

This sequence belongs to the bacterial ribosomal protein bL34 family. In terms of assembly, component of the mitochondrial large ribosomal subunit (mt-LSU). Mature mammalian 55S mitochondrial ribosomes consist of a small (28S) and a large (39S) subunit. The 28S small subunit contains a 12S ribosomal RNA (12S mt-rRNA) and 30 different proteins. The 39S large subunit contains a 16S rRNA (16S mt-rRNA), a copy of mitochondrial valine transfer RNA (mt-tRNA(Val)), which plays an integral structural role, and 52 different proteins.

The protein localises to the mitochondrion. The chain is Large ribosomal subunit protein bL34m (MRPL34) from Homo sapiens (Human).